The following is a 59-amino-acid chain: Large ribosomal subunit protein bL32 (59 aa).

The tract at residues 1 to 22 (MAVQQNKKSPSKRGMHRSHDFL) is disordered.

Belongs to the bacterial ribosomal protein bL32 family.

This chain is Large ribosomal subunit protein bL32, found in Thiobacillus denitrificans (strain ATCC 25259 / T1).